An 880-amino-acid chain; its full sequence is Dynamin-like protein A (880 aa).

Positions 1 to 124 are disordered; that stretch reads MSVFKKKDKS…QVELERKRRD (124 aa). Positions 8–20 are enriched in basic and acidic residues; that stretch reads DKSDDKKKKHDEE. Over residues 22-31 the composition is skewed to polar residues; it reads PQGTFQPASQ. Low complexity predominate over residues 32–68; it reads STSNTNLNSLASSVNNGASVGSTNGSTPNNSNGSTPT. Positions 69–152 form a coiled coil; it reads YNHNNSAEEL…NEQVEISSLE (84 aa). Composition is skewed to basic and acidic residues over residues 77–94 and 103–124; these read ELEK…KSEL and KKKE…KRRD. The 288-residue stretch at 191 to 478 folds into the Dynamin-type G domain; that stretch reads AVSHPEIVFV…VWKSYQDTIP (288 aa). A G1 motif region spans residues 201–208; that stretch reads GPRSSGKS. 201–208 provides a ligand contact to GTP; it reads GPRSSGKS. Residues 227 to 240 form a G2 motif region; it reads IVGVGGSNANGCSK. Positions 315–318 are G3 motif; the sequence is DSPG. GTP is bound by residues 315–319 and 380–383; these read DSPGL and TKFH. Positions 380 to 383 are G4 motif; the sequence is TKFH. The G5 motif stretch occupies residues 413–416; that stretch reads LPNH. A coiled-coil region spans residues 479–509; sequence RILKHLRSKRQTAEATLNELQKQSSSLDSTK. A compositionally biased stretch (polar residues) spans 532–543; sequence TSEGNPSANGQT. Residues 532-551 form a disordered region; it reads TSEGNPSANGQTLDEEKSQQ. Residues 824–861 adopt a coiled-coil conformation; sequence SNEQLEQLFEVQATREQLKQEEKKQQQILEKYSQIDEQ.

Belongs to the TRAFAC class dynamin-like GTPase superfamily. Dynamin/Fzo/YdjA family.

Its subcellular location is the cytoplasm. It localises to the cleavage furrow. The enzyme catalyses GTP + H2O = GDP + phosphate + H(+). Its function is as follows. Involved in cytokinesis. May hydrolyze GTP. This Dictyostelium discoideum (Social amoeba) protein is Dynamin-like protein A (dlpA).